The sequence spans 279 residues: Acyl-[acyl-carrier-protein]--UDP-N-acetylglucosamine O-acyltransferase (279 aa).

Residues 256–279 are disordered; it reads IERGADKDALQDESVEKEGALVES.

This sequence belongs to the transferase hexapeptide repeat family. LpxA subfamily. As to quaternary structure, homotrimer.

It localises to the cytoplasm. It carries out the reaction a (3R)-hydroxyacyl-[ACP] + UDP-N-acetyl-alpha-D-glucosamine = a UDP-3-O-[(3R)-3-hydroxyacyl]-N-acetyl-alpha-D-glucosamine + holo-[ACP]. The protein operates within glycolipid biosynthesis; lipid IV(A) biosynthesis; lipid IV(A) from (3R)-3-hydroxytetradecanoyl-[acyl-carrier-protein] and UDP-N-acetyl-alpha-D-glucosamine: step 1/6. In terms of biological role, involved in the biosynthesis of lipid A, a phosphorylated glycolipid that anchors the lipopolysaccharide to the outer membrane of the cell. The sequence is that of Acyl-[acyl-carrier-protein]--UDP-N-acetylglucosamine O-acyltransferase from Chlamydia caviae (strain ATCC VR-813 / DSM 19441 / 03DC25 / GPIC) (Chlamydophila caviae).